The chain runs to 1828 residues: Dedicator of cytokinesis protein 2 (1828 aa).

An SH3 domain is found at 8-69 (DKERHGVAIY…PTSFIHLKEV (62 aa)). Residue lysine 304 is modified to N6-acetyllysine. In terms of domain architecture, C2 DOCK-type spans 423 to 607 (RNDIYITLLQ…DVFSISTLVC (185 aa)). Serine 588 and serine 593 each carry phosphoserine. N6-acetyllysine is present on lysine 738. Positions 1210 to 1621 (YKDNNREEMY…VEKEYGVREM (412 aa)) constitute a DOCKER domain. Positions 1652–1703 (SDCSTPSKVPAESFDLESAPPKTPKVEEEPISPGSTLPEVKLRRSKKRTKRS) are disordered. Phosphoserine is present on residues serine 1683, serine 1704, serine 1729, and serine 1782.

This sequence belongs to the DOCK family. In terms of assembly, homodimer. Interacts with RAC1 and RAC2. Interacts with CRKL and VAV. Interacts with CD3Z. Specifically expressed in hematopoietic cells.

It is found in the endomembrane system. Its subcellular location is the cytoplasm. The protein resides in the cytoskeleton. Its function is as follows. Involved in cytoskeletal rearrangements required for lymphocyte migration in response of chemokines. Activates RAC1 and RAC2, but not CDC42, by functioning as a guanine nucleotide exchange factor (GEF), which exchanges bound GDP for free GTP. May also participate in IL2 transcriptional activation via the activation of RAC2. The sequence is that of Dedicator of cytokinesis protein 2 (Dock2) from Mus musculus (Mouse).